A 139-amino-acid chain; its full sequence is Transcription antitermination protein NusB (139 aa).

Belongs to the NusB family.

In terms of biological role, involved in transcription antitermination. Required for transcription of ribosomal RNA (rRNA) genes. Binds specifically to the boxA antiterminator sequence of the ribosomal RNA (rrn) operons. The polypeptide is Transcription antitermination protein NusB (Nitratiruptor sp. (strain SB155-2)).